Reading from the N-terminus, the 284-residue chain is Averufin oxidase A (284 aa).

Positions 1 to 23 (MPTYALLGATGATGSAILRCLLA) are cleaved as a signal peptide. 3 N-linked (GlcNAc...) asparagine glycosylation sites follow: asparagine 62, asparagine 86, and asparagine 190.

This sequence belongs to the avfA family.

Its pathway is mycotoxin biosynthesis. In terms of biological role, averufin oxidase A; part of the fragmented gene cluster that mediates the biosynthesis of dothistromin (DOTH), a polyketide toxin very similar in structure to the aflatoxin precursor, versicolorin B. The first step of the pathway is the conversion of acetate to norsolorinic acid (NOR) and requires the fatty acid synthase subunits hexA and hexB, as well as the polyketide synthase pksA. PksA combines a hexanoyl starter unit and 7 malonyl-CoA extender units to synthesize the precursor NOR. The hexanoyl starter unit is provided to the acyl-carrier protein (ACP) domain by the fungal fatty acid synthase hexA/hexB. The second step is the conversion of NOR to averantin (AVN) and requires the norsolorinic acid ketoreductase nor1, which catalyzes the dehydration of norsolorinic acid to form (1'S)-averantin. The cytochrome P450 monooxygenase avnA then catalyzes the hydroxylation of AVN to 5'hydroxyaverantin (HAVN). The next step is performed by adhA that transforms HAVN to averufin (AVF). Averufin might then be converted to hydroxyversicolorone by cypX and avfA. Hydroxyversicolorone is further converted versiconal hemiacetal acetate (VHA) by moxY. VHA is then the substrate for the versiconal hemiacetal acetate esterase est1 to yield versiconal (VAL). Versicolorin B synthase vbsA then converts VAL to versicolorin B (VERB) by closing the bisfuran ring. Then, the activity of the versicolorin B desaturase verB leads to versicolorin A (VERA). DotB, a predicted chloroperoxidase, may perform epoxidation of the A-ring of VERA. Alternatively, a cytochrome P450, such as cypX or avnA could catalyze this step. It is also possible that another, uncharacterized, cytochrome P450 enzyme is responsible for this step. Opening of the epoxide could potentially be achieved by the epoxide hydrolase epoA. However, epoA seems not to be required for DOTH biosynthesis, but other epoxide hydrolases may have the ability to complement this hydrolysis. Alternatively, opening of the epoxide ring could be achieved non-enzymatically. The next step is the deoxygenation of ring A to yield the 5,8-dihydroxyanthraquinone which is most likely catalyzed by the NADPH dehydrogenase encoded by ver1. The last stages of DOTH biosynthesis are proposed to involve hydroxylation of the bisfuran. OrdB and norB might have oxidative roles here. An alternative possibility is that cytochrome P450 monoogenases such as avnA and cypX might perform these steps in addition to previously proposed steps. The sequence is that of Averufin oxidase A from Dothistroma septosporum (strain NZE10 / CBS 128990) (Red band needle blight fungus).